We begin with the raw amino-acid sequence, 478 residues long: tRNA (guanine(10)-N(2))-methyltransferase TRMT11 (478 aa).

Positions 457–478 (EERARSEMANAENVKSKGKEDV) are disordered.

This sequence belongs to the class I-like SAM-binding methyltransferase superfamily. TRM11 methyltransferase family. In terms of assembly, part of the heterodimeric TRMT11-TRM112 methyltransferase complex; this complex forms an active tRNA methyltransferase, where TRMT112 acts as an activator of the catalytic subunit TRMT11.

Its subcellular location is the cytoplasm. It carries out the reaction guanosine(10) in tRNA + S-adenosyl-L-methionine = N(2)-methylguanosine(10) in tRNA + S-adenosyl-L-homocysteine + H(+). Its function is as follows. Catalytic subunit of the TRMT11-TRM112 methyltransferase complex, that specifically mediates the S-adenosyl-L-methionine-dependent N(2)-methylation of guanosine nucleotide at position 10 (m2G10) in tRNAs. This is one of the major tRNA (guanine-N(2))-methyltransferases. The sequence is that of tRNA (guanine(10)-N(2))-methyltransferase TRMT11 (trmt11.L) from Xenopus laevis (African clawed frog).